A 603-amino-acid polypeptide reads, in one-letter code: Elongation factor 4 (603 aa).

In terms of domain architecture, tr-type G spans Ser9–Lys191. Residues Asp21–Thr26 and Asn138–Asp141 each bind GTP.

It belongs to the TRAFAC class translation factor GTPase superfamily. Classic translation factor GTPase family. LepA subfamily.

The protein resides in the cell inner membrane. The enzyme catalyses GTP + H2O = GDP + phosphate + H(+). Required for accurate and efficient protein synthesis under certain stress conditions. May act as a fidelity factor of the translation reaction, by catalyzing a one-codon backward translocation of tRNAs on improperly translocated ribosomes. Back-translocation proceeds from a post-translocation (POST) complex to a pre-translocation (PRE) complex, thus giving elongation factor G a second chance to translocate the tRNAs correctly. Binds to ribosomes in a GTP-dependent manner. This Idiomarina loihiensis (strain ATCC BAA-735 / DSM 15497 / L2-TR) protein is Elongation factor 4.